The following is a 220-amino-acid chain: Small ribosomal subunit protein uS5 (220 aa).

The interval 1-39 (MAEQPAGQAGTTDNRDARGDREGRRRDSGRGSRERDGEK) is disordered. The segment covering 13-39 (DNRDARGDREGRRRDSGRGSRERDGEK) has biased composition (basic and acidic residues). The S5 DRBM domain maps to 42-105 (YLERVVAINR…EEARKSFFRV (64 aa)).

Belongs to the universal ribosomal protein uS5 family. As to quaternary structure, part of the 30S ribosomal subunit. Contacts proteins S4 and S8.

In terms of biological role, with S4 and S12 plays an important role in translational accuracy. Functionally, located at the back of the 30S subunit body where it stabilizes the conformation of the head with respect to the body. The chain is Small ribosomal subunit protein uS5 from Mycobacterium bovis (strain ATCC BAA-935 / AF2122/97).